A 95-amino-acid chain; its full sequence is Aspartyl/glutamyl-tRNA(Asn/Gln) amidotransferase subunit C (95 aa).

Belongs to the GatC family. As to quaternary structure, heterotrimer of A, B and C subunits.

The catalysed reaction is L-glutamyl-tRNA(Gln) + L-glutamine + ATP + H2O = L-glutaminyl-tRNA(Gln) + L-glutamate + ADP + phosphate + H(+). It carries out the reaction L-aspartyl-tRNA(Asn) + L-glutamine + ATP + H2O = L-asparaginyl-tRNA(Asn) + L-glutamate + ADP + phosphate + 2 H(+). In terms of biological role, allows the formation of correctly charged Asn-tRNA(Asn) or Gln-tRNA(Gln) through the transamidation of misacylated Asp-tRNA(Asn) or Glu-tRNA(Gln) in organisms which lack either or both of asparaginyl-tRNA or glutaminyl-tRNA synthetases. The reaction takes place in the presence of glutamine and ATP through an activated phospho-Asp-tRNA(Asn) or phospho-Glu-tRNA(Gln). This Caulobacter sp. (strain K31) protein is Aspartyl/glutamyl-tRNA(Asn/Gln) amidotransferase subunit C.